We begin with the raw amino-acid sequence, 191 residues long: tRNA-specific adenosine deaminase 2 (191 aa).

In terms of domain architecture, CMP/dCMP-type deaminase spans 20–145; it reads EETEKWMEQA…SVLDIASADL (126 aa). Histidine 71 is a binding site for Zn(2+). The active-site Proton donor is glutamate 73. Positions 107 and 110 each coordinate Zn(2+).

Belongs to the cytidine and deoxycytidylate deaminase family. ADAT2 subfamily. Zn(2+) is required as a cofactor.

The enzyme catalyses adenosine(34) in tRNA + H2O + H(+) = inosine(34) in tRNA + NH4(+). Functionally, probably participates in deamination of adenosine-34 to inosine in many tRNAs. In Bos taurus (Bovine), this protein is tRNA-specific adenosine deaminase 2 (DEADC1).